Consider the following 363-residue polypeptide: Large ribosomal subunit protein uL4 (363 aa).

It belongs to the universal ribosomal protein uL4 family. As to quaternary structure, component of the large ribosomal subunit. Mature ribosomes consist of a small (40S) and a large (60S) subunit. The 40S subunit contains about 32 different proteins and 1 molecule of RNA (18S). The 60S subunit contains 45 different proteins and 3 molecules of RNA (25S, 5.8S and 5S).

The protein localises to the cytoplasm. Component of the ribosome, a large ribonucleoprotein complex responsible for the synthesis of proteins in the cell. The small ribosomal subunit (SSU) binds messenger RNAs (mRNAs) and translates the encoded message by selecting cognate aminoacyl-transfer RNA (tRNA) molecules. The large subunit (LSU) contains the ribosomal catalytic site termed the peptidyl transferase center (PTC), which catalyzes the formation of peptide bonds, thereby polymerizing the amino acids delivered by tRNAs into a polypeptide chain. The nascent polypeptides leave the ribosome through a tunnel in the LSU and interact with protein factors that function in enzymatic processing, targeting, and the membrane insertion of nascent chains at the exit of the ribosomal tunnel. This Candida albicans (strain SC5314 / ATCC MYA-2876) (Yeast) protein is Large ribosomal subunit protein uL4.